Reading from the N-terminus, the 734-residue chain is Methylcrotonoyl-CoA carboxylase subunit alpha, mitochondrial (734 aa).

Residues 1-25 constitute a mitochondrion transit peptide; sequence MSMMTVWALRRNVRRKNHSMLVRYI. Positions 37-484 constitute a Biotin carboxylation domain; the sequence is CIEKILVANR…ETHFIEHHKS (448 aa). Positions 152, 236, and 271 each coordinate ATP. An ATP-grasp domain is found at 156–354; the sequence is KRIMGAAGVP…LVEWQIRVAN (199 aa). Mn(2+) contacts are provided by E311, E325, and N327. The active site involves R329. S645 is subject to Phosphoserine. The interval 645 to 666 is disordered; that stretch reads SEDEEGVQHRTSSETSSHPPGT. Residues 657–733 enclose the Biotinyl-binding domain; it reads SETSSHPPGT…SDGSALFRIK (77 aa). An N6-biotinyllysine modification is found at K699.

Probably a heterodimer composed of biotin-containing alpha subunits and beta subunits. Biotin serves as cofactor. It depends on Mn(2+) as a cofactor. As to expression, in roots, cotyledons, leaves, flowers, ovaries, siliques and embryos.

The protein resides in the mitochondrion matrix. The enzyme catalyses 3-methylbut-2-enoyl-CoA + hydrogencarbonate + ATP = 3-methyl-(2E)-glutaconyl-CoA + ADP + phosphate + H(+). Its pathway is amino-acid degradation; L-leucine degradation; (S)-3-hydroxy-3-methylglutaryl-CoA from 3-isovaleryl-CoA: step 2/3. Functionally, biotin-attachment subunit of the 3-methylcrotonyl-CoA carboxylase, an enzyme that catalyzes the conversion of 3-methylcrotonyl-CoA to 3-methylglutaconyl-CoA, a critical step for leucine and isovaleric acid catabolism. This chain is Methylcrotonoyl-CoA carboxylase subunit alpha, mitochondrial (MCCA), found in Arabidopsis thaliana (Mouse-ear cress).